The primary structure comprises 190 residues: Glycerol-3-phosphate acyltransferase 2 (190 aa).

Transmembrane regions (helical) follow at residues 1–21 (MNIL…ALIV), 53–73 (VIVA…PLIL), 76–96 (TINP…SVFA), 110–130 (VFLF…VLTL), and 152–172 (LIFE…SIII).

The protein belongs to the PlsY family. Probably interacts with PlsX.

The protein resides in the cell membrane. It carries out the reaction an acyl phosphate + sn-glycerol 3-phosphate = a 1-acyl-sn-glycero-3-phosphate + phosphate. It participates in lipid metabolism; phospholipid metabolism. In terms of biological role, catalyzes the transfer of an acyl group from acyl-phosphate (acyl-PO(4)) to glycerol-3-phosphate (G3P) to form lysophosphatidic acid (LPA). This enzyme utilizes acyl-phosphate as fatty acyl donor, but not acyl-CoA or acyl-ACP. The protein is Glycerol-3-phosphate acyltransferase 2 of Bacillus anthracis.